A 199-amino-acid chain; its full sequence is Recombination protein RecR (199 aa).

The segment at 56-71 (CAICGNVSEKETCGIC) adopts a C4-type zinc-finger fold. Residues 79–174 (ATICVVEEAK…RVTRLASGLP (96 aa)) form the Toprim domain.

This sequence belongs to the RecR family.

Functionally, may play a role in DNA repair. It seems to be involved in an RecBC-independent recombinational process of DNA repair. It may act with RecF and RecO. The chain is Recombination protein RecR from Clavibacter michiganensis subsp. michiganensis (strain NCPPB 382).